The following is a 127-amino-acid chain: uncharacterized protein (127 aa).

This is an uncharacterized protein from Schizosaccharomyces pombe (strain 972 / ATCC 24843) (Fission yeast).